Reading from the N-terminus, the 234-residue chain is Iron-sulfur cluster co-chaperone protein HscB (234 aa).

A divalent metal cation contacts are provided by Cys-40, Cys-43, Cys-57, and Cys-60. The 73-residue stretch at Asp-71–Leu-143 folds into the J domain.

This sequence belongs to the HscB family. Interacts with ISCU and HSPA9 to form an iron-sulfur transfer complex. Interacts with SDHAF1 (via the first LYR motif); the interaction recruits the iron-sulfur transfer complex composed of HSC20, HSPA9 and ISCU and mediates the incorporation of iron-sulfur clusters into SDHB which also interacts with HSC20. Interacts with the cytoplasmic form of ISCU and with CIA complex member CIAO1 (via LYR motif). In terms of assembly, homodimer. Interacts with ISCU (cytoplasmic form); this interaction stabilizes the (Fe-S) clusters on ISCU. Interacts with the CIA complex member CIAO1 (via LYR motif).

It localises to the cytoplasm. The protein localises to the mitochondrion. It functions in the pathway cofactor biosynthesis; iron-sulfur cluster biosynthesis. Its function is as follows. Acts as a co-chaperone in iron-sulfur cluster assembly in mitochondria. Required for incorporation of iron-sulfur clusters into SDHB, the iron-sulfur protein subunit of succinate dehydrogenase that is involved in complex II of the mitochondrial electron transport chain. Recruited to SDHB by interaction with SDHAF1 which first binds SDHB and then recruits the iron-sulfur transfer complex formed by HSC20, HSPA9 and ISCU through direct binding to HSC20. Plays an essential role in hematopoiesis. Acts as a co-chaperone in iron-sulfur cluster assembly in the cytoplasm. Also mediates complex formation between components of the cytosolic iron-sulfur biogenesis pathway and the CIA targeting complex composed of CIAO1, DIPK1B/FAM69B and MMS19 by binding directly to the scaffold protein ISCU and to CIAO1. This facilitates iron-sulfur cluster insertion into a number of cytoplasmic and nuclear proteins including POLD1, ELP3, DPYD and PPAT. The protein is Iron-sulfur cluster co-chaperone protein HscB of Mus musculus (Mouse).